We begin with the raw amino-acid sequence, 210 residues long: Ion-translocating oxidoreductase complex subunit G (210 aa).

Residues 9 to 29 (SLVLALFAIAATALVTITYAL) traverse the membrane as a helical segment. At Thr176 the chain carries FMN phosphoryl threonine.

It belongs to the RnfG family. In terms of assembly, the complex is composed of six subunits: RnfA, RnfB, RnfC, RnfD, RnfE and RnfG. FMN serves as cofactor.

It is found in the cell inner membrane. In terms of biological role, part of a membrane-bound complex that couples electron transfer with translocation of ions across the membrane. In Aliivibrio fischeri (strain ATCC 700601 / ES114) (Vibrio fischeri), this protein is Ion-translocating oxidoreductase complex subunit G.